A 446-amino-acid chain; its full sequence is Baeyer-Villiger oxidase mdpL (446 aa).

It belongs to the AflY oxidoreductase family. It depends on NADPH as a cofactor.

It participates in secondary metabolite biosynthesis. Its function is as follows. Baeyer-Villiger oxidase; part of the gene cluster that mediates the biosynthesis of monodictyphenone, a prenyl xanthone derivative. The pathway begins with the synthesis of atrochrysone thioester by the polyketide synthase (PKS) mdpG. The atrochrysone carboxyl ACP thioesterase mdpF then breaks the thioester bond and releases the atrochrysone carboxylic acid from mdpG. The atrochrysone carboxylic acid is then converted to atrochrysone which is further transformed into emodin anthrone. The next step is performed by the anthrone oxygenase mdpH that catalyzes the oxidation of emodinanthrone to emodin. Emodin is further modified to yield monodictyphenone via several steps involving mdpB, mdpC mdpJ, mdpK and mdpL. These enzymes with xptA, xptB and xptC are also proposed to be involved in the synthesis of shamixanthone from emodin. Especially, direct reduction of emodin by the short chain dehydrogenase mdpC followed by dehydration catalyzed by the scytalone dehydratase-like protein mdpB gives loss of oxygen and formation of chrysophanol intermediate in two simple steps. The polypeptide is Baeyer-Villiger oxidase mdpL (Emericella nidulans (strain FGSC A4 / ATCC 38163 / CBS 112.46 / NRRL 194 / M139) (Aspergillus nidulans)).